The primary structure comprises 437 residues: uncharacterized protein (437 aa).

Over residues 63–87 the composition is skewed to polar residues; it reads PSSANVSFQNSDDNLSTSRGRSASP. Disordered regions lie at residues 63–97, 112–147, and 346–437; these read PSSANVSFQNSDDNLSTSRGRSASPTPIRKFSNFP, VKKDQQTRNQLPPMKRLNSEEEEEQQGKTKTTKKET, and PKNA…YSIW. Positions 399 to 409 are enriched in polar residues; it reads EALSPSKSNPD. The span at 425 to 437 shows a compositional bias: low complexity; sequence KKPSSSSSNYSIW.

This is an uncharacterized protein from Caenorhabditis elegans.